We begin with the raw amino-acid sequence, 199 residues long: MQQKQMNIELRSKTGKGISRKLRSADMVPGVVYGKGMDPMAVSINYRELQAAMAGEGGQNNLITLVGGGSLDQSMAIVADLQRDAVKGTYKHVDLHRVNMSEKLRVTVPVVLKGTAIGVKEGGLLDFAHHELHVECLPGNIPDHIEIDVTSLAVAHSIHVGEIALPEGVKVLDNPKTPVVSVLGRVKEEAEAAAEAAEA.

The protein belongs to the bacterial ribosomal protein bL25 family. CTC subfamily. As to quaternary structure, part of the 50S ribosomal subunit; part of the 5S rRNA/L5/L18/L25 subcomplex. Contacts the 5S rRNA. Binds to the 5S rRNA independently of L5 and L18.

Its function is as follows. This is one of the proteins that binds to the 5S RNA in the ribosome where it forms part of the central protuberance. This Pelobacter propionicus (strain DSM 2379 / NBRC 103807 / OttBd1) protein is Large ribosomal subunit protein bL25.